The primary structure comprises 622 residues: MSTDNKQSLPAITLAAIGVVYGDIGTSPLYTLRECLSGQFGFGVERDAVFGFLSLIFWLLIFVVSIKYLTFVMRADNAGEGGILTLMSLAGRNTSARTTSMLVIMGLIGGSFFYGEVVITPAISVMSAIEGLEIVAPQLDTWIVPLSIVVLTLLFMIQKHGTGMVGKLFAPIMLTWFLILAVLGLRSIIANPEVLHALNPVWAVRFFLEYKTVSFIALGAVVLSITGVEALYADMGHFGKFPIRLAWFTVVLPSLVLNYFGQGALLLKHPEAIKNPFFLLAPDWALIPLLILAALATVIASQAVISGVFSLTRQAVRLGYLSPMRIIHTSEMESGQIYIPFVNWLLYFAVVVVIVSFEHSSNLAAAYGIAVTGTMVLTSILSTTVARKNWHWNKYLVALILVAFLCVDIPLFSANLDKLLSGGWLPLSLGLIMFTIMTTWKSERFRLLRRMHEHGNSLEAMIASLEKSPPVRVPGTAVYMSRVLNVIPFALLHNLKHNKVLHERVILLTLRTEDAPYVHNVRRVQIEQLSPTFWRVVASYGWRETPNVEEVFHRCGLEGLSCRMMETSFFMSHESLIVGKRPWYLRLRGKLYLLLQRNALRAPDQFEIPPNRVIELGTQVEI.

Helical transmembrane passes span 9–29 (LPAITLAAIGVVYGDIGTSPL), 49–69 (VFGFLSLIFWLLIFVVSIKYL), 103–123 (VIMGLIGGSFFYGEVVITPAI), 137–157 (PQLDTWIVPLSIVVLTLLFMI), 165–185 (VGKLFAPIMLTWFLILAVLGL), 213–233 (VSFIALGAVVLSITGVEALYA), 247–267 (WFTVVLPSLVLNYFGQGALLL), 276–296 (PFFLLAPDWALIPLLILAALA), 337–357 (IYIPFVNWLLYFAVVVVIVSF), 363–383 (LAAAYGIAVTGTMVLTSILST), 396–416 (LVALILVAFLCVDIPLFSANL), and 419–439 (LLSGGWLPLSLGLIMFTIMTT).

It belongs to the HAK/KUP transporter (TC 2.A.72) family.

The protein localises to the cell inner membrane. It catalyses the reaction K(+)(in) + H(+)(in) = K(+)(out) + H(+)(out). Its function is as follows. Responsible for the low-affinity transport of potassium into the cell. Likely operates as a K(+):H(+) symporter. The protein is Low affinity potassium transport system protein Kup of Salmonella arizonae (strain ATCC BAA-731 / CDC346-86 / RSK2980).